A 65-amino-acid chain; its full sequence is Photosystem II reaction center protein Z (65 aa).

A run of 2 helical transmembrane segments spans residues 8-28 and 41-61; these read AVFALVLLSFVLIVAVPVALA and YAGAALWTSLIIVIGVLDSVV.

It belongs to the PsbZ family. PSII is composed of 1 copy each of membrane proteins PsbA, PsbB, PsbC, PsbD, PsbE, PsbF, PsbH, PsbI, PsbJ, PsbK, PsbL, PsbM, PsbT, PsbX, PsbY, PsbZ, Psb30/Ycf12, at least 3 peripheral proteins of the oxygen-evolving complex and a large number of cofactors. It forms dimeric complexes.

The protein localises to the plastid. The protein resides in the cyanelle thylakoid membrane. Its function is as follows. May control the interaction of photosystem II (PSII) cores with the light-harvesting antenna, regulates electron flow through the 2 photosystem reaction centers. PSII is a light-driven water plastoquinone oxidoreductase, using light energy to abstract electrons from H(2)O, generating a proton gradient subsequently used for ATP formation. This chain is Photosystem II reaction center protein Z, found in Cyanophora paradoxa.